Here is a 226-residue protein sequence, read N- to C-terminus: Small ribosomal subunit protein uS3 (226 aa).

The 69-residue stretch at 39-107 (VRKFLNKELR…PAQINISEVR (69 aa)) folds into the KH type-2 domain.

This sequence belongs to the universal ribosomal protein uS3 family. In terms of assembly, part of the 30S ribosomal subunit. Forms a tight complex with proteins S10 and S14.

Its function is as follows. Binds the lower part of the 30S subunit head. Binds mRNA in the 70S ribosome, positioning it for translation. In Idiomarina loihiensis (strain ATCC BAA-735 / DSM 15497 / L2-TR), this protein is Small ribosomal subunit protein uS3.